A 314-amino-acid chain; its full sequence is Epithelial cell adhesion molecule (314 aa).

A signal peptide spans 1 to 23; that stretch reads MAPPQVLAFGLLLAAATATFAAA. Topologically, residues 24-265 are extracellular; it reads QEECVCENYK…APEFSMQGLK (242 aa). Disulfide bonds link Cys-27-Cys-46, Cys-29-Cys-59, Cys-38-Cys-48, Cys-66-Cys-99, Cys-110-Cys-116, and Cys-118-Cys-135. The region spanning 63–135 is the Thyroglobulin type-1 domain; the sequence is AAKCLVMKAE…RTDKDTEITC (73 aa). N-linked (GlcNAc...) asparagine; partial glycosylation is present at Asn-74. N-linked (GlcNAc...) asparagine glycosylation is present at Asn-111. Asn-198 carries N-linked (GlcNAc...) asparagine glycosylation. Residues 266–288 form a helical membrane-spanning segment; it reads AGVIAVIVVVVIAVVAGIVVLVI. The Cytoplasmic portion of the chain corresponds to 289–314; it reads SRKKRMAKYEKAEIKEMGEMHRELNA.

This sequence belongs to the EPCAM family. As to quaternary structure, monomer. Interacts with phosphorylated CLDN7. Post-translationally, hyperglycosylated in carcinoma tissue as compared with autologous normal epithelia. Glycosylation at Asn-198 is crucial for protein stability. As to expression, highly and selectively expressed by undifferentiated rather than differentiated embryonic stem cells (ESC). Levels rapidly diminish as soon as ESC's differentiate (at protein levels). Expressed in almost all epithelial cell membranes but not on mesodermal or neural cell membranes. Found on the surface of adenocarcinoma.

The protein localises to the lateral cell membrane. The protein resides in the cell junction. It localises to the tight junction. Functionally, may act as a physical homophilic interaction molecule between intestinal epithelial cells (IECs) and intraepithelial lymphocytes (IELs) at the mucosal epithelium for providing immunological barrier as a first line of defense against mucosal infection. Plays a role in embryonic stem cells proliferation and differentiation. Up-regulates the expression of FABP5, MYC and cyclins A and E. In Homo sapiens (Human), this protein is Epithelial cell adhesion molecule (EPCAM).